We begin with the raw amino-acid sequence, 130 residues long: Histone H2B (130 aa).

The segment at 1–31 is disordered; the sequence is MAKSARHVTGKAPSSLDAHDRKKSKKKSSSM. A Glycyl lysine isopeptide (Lys-Gly) (interchain with G-Cter in ubiquitin) cross-link involves residue lysine 122.

This sequence belongs to the histone H2B family. The nucleosome is a histone octamer containing two molecules each of H2A, H2B, H3 and H4 assembled in one H3-H4 heterotetramer and two H2A-H2B heterodimers. The octamer wraps approximately 147 bp of DNA. In terms of processing, monoubiquitinated to form H2BK123ub1. H2BK123ub1 gives a specific tag for epigenetic transcriptional activation and is also prerequisite for H3K4me and H3K79me formation.

The protein localises to the nucleus. Its subcellular location is the chromosome. Functionally, core component of nucleosome. Nucleosomes wrap and compact DNA into chromatin, limiting DNA accessibility to the cellular machineries which require DNA as a template. Histones thereby play a central role in transcription regulation, DNA repair, DNA replication and chromosomal stability. DNA accessibility is regulated via a complex set of post-translational modifications of histones, also called histone code, and nucleosome remodeling. This Encephalitozoon cuniculi (strain GB-M1) (Microsporidian parasite) protein is Histone H2B (HTB1).